We begin with the raw amino-acid sequence, 186 residues long: ATP synthase subunit delta (186 aa).

The protein belongs to the ATPase delta chain family. F-type ATPases have 2 components, F(1) - the catalytic core - and F(0) - the membrane proton channel. F(1) has five subunits: alpha(3), beta(3), gamma(1), delta(1), epsilon(1). F(0) has three main subunits: a(1), b(2) and c(10-14). The alpha and beta chains form an alternating ring which encloses part of the gamma chain. F(1) is attached to F(0) by a central stalk formed by the gamma and epsilon chains, while a peripheral stalk is formed by the delta and b chains.

The protein localises to the cell inner membrane. In terms of biological role, f(1)F(0) ATP synthase produces ATP from ADP in the presence of a proton or sodium gradient. F-type ATPases consist of two structural domains, F(1) containing the extramembraneous catalytic core and F(0) containing the membrane proton channel, linked together by a central stalk and a peripheral stalk. During catalysis, ATP synthesis in the catalytic domain of F(1) is coupled via a rotary mechanism of the central stalk subunits to proton translocation. Functionally, this protein is part of the stalk that links CF(0) to CF(1). It either transmits conformational changes from CF(0) to CF(1) or is implicated in proton conduction. The polypeptide is ATP synthase subunit delta (Mesorhizobium japonicum (strain LMG 29417 / CECT 9101 / MAFF 303099) (Mesorhizobium loti (strain MAFF 303099))).